Consider the following 264-residue polypeptide: 1-(5-phosphoribosyl)-5-[(5-phosphoribosylamino)methylideneamino] imidazole-4-carboxamide isomerase (264 aa).

It belongs to the HisA/HisF family.

It localises to the cytoplasm. The enzyme catalyses 1-(5-phospho-beta-D-ribosyl)-5-[(5-phospho-beta-D-ribosylamino)methylideneamino]imidazole-4-carboxamide = 5-[(5-phospho-1-deoxy-D-ribulos-1-ylimino)methylamino]-1-(5-phospho-beta-D-ribosyl)imidazole-4-carboxamide. It functions in the pathway amino-acid biosynthesis; L-histidine biosynthesis; L-histidine from 5-phospho-alpha-D-ribose 1-diphosphate: step 4/9. The chain is 1-(5-phosphoribosyl)-5-[(5-phosphoribosylamino)methylideneamino] imidazole-4-carboxamide isomerase (HIS6) from Yarrowia lipolytica (strain CLIB 122 / E 150) (Yeast).